A 685-amino-acid chain; its full sequence is RING finger protein 145 (685 aa).

Helical transmembrane passes span 53-73 (YIAL…LTLP), 77-97 (LVQL…HQLS), 123-143 (FTTA…VMQT), 151-171 (AHLL…IVFI), 174-194 (FAMI…LLVP), 225-245 (LVLP…QIYT), 275-295 (YSLL…LTLC), 316-336 (TEGI…LQVI), 340-360 (FLLS…MLEI), 384-404 (SLCL…CQFF), 410-430 (LLII…TLLI), 460-480 (LLEF…TLFG), and 482-502 (WTVM…WLRA). Residues 537-575 (CSICFQDMKSAVITPCSHFFHAACLKKWLYVQETCPLCH) form an RING-type; atypical zinc finger. A disordered region spans residues 582–685 (LQPTSSPGTP…VSTSDVNCAS (104 aa)). A compositionally biased stretch (low complexity) spans 583-602 (QPTSSPGTPTQGTPAANQNP). Residues 620–631 (EGIRAEEMKTSA) are compositionally biased toward basic and acidic residues.

Its subcellular location is the membrane. This is RING finger protein 145 (rnf145) from Danio rerio (Zebrafish).